Here is a 546-residue protein sequence, read N- to C-terminus: Cytokine-like nuclear factor N-PAC (546 aa).

The 59-residue stretch at 8–66 (LGDLVWGKLGRYPPWPGKIVNPPKDLKKPRGKKCFFVKFFGTEDHAWIKVEQLKPYHAH) folds into the PWWP domain. Basic and acidic residues-rich tracts occupy residues 91-145 (RRAK…EGKK) and 161-181 (RAQEQSPRKRGRPPKDEKDLT). The segment at 91-187 (RRAKGKDQTS…KDLTIPESST (97 aa)) is disordered. At Ser130 the chain carries Phosphoserine. A Glycyl lysine isopeptide (Lys-Gly) (interchain with G-Cter in SUMO2) cross-link involves residue Lys135. Ser166 carries the phosphoserine modification. Positions 167 to 179 (PRKRGRPPKDEKD) form a DNA-binding region, a.T hook. Glycyl lysine isopeptide (Lys-Gly) (interchain with G-Cter in SUMO2) cross-links involve residues Lys175, Lys178, Lys200, and Lys210. Positions 213–216 (DPHF) are interaction with histone H3. The interval 215 to 224 (HFHHFLLSQT) is interaction with KDM1B. Glycyl lysine isopeptide (Lys-Gly) (interchain with G-Cter in SUMO2) cross-links involve residues Lys226, Lys236, Lys239, and Lys268. The segment at 260 to 546 (GSITPTDKKI…MSAVYRAYIH (287 aa)) is dehydrogenase domain. NAD(+) is bound at residue 270-284 (GFLGLGLMGSGIVSN). Lys301 participates in a covalent cross-link: Glycyl lysine isopeptide (Lys-Gly) (interchain with G-Cter in SUMO2). NAD(+) is bound by residues Thr355 and Lys498. Ser533 carries the phosphoserine modification.

The protein belongs to the HIBADH-related family. NP60 subfamily. As to quaternary structure, homotetramere. Interacts with MAPK14. Interacts with KDM1B at nucleosomes; this interaction stimulates H3K4me1 and H3K4me2 demethylation. Binds to mononucleosomes. Interacts with GATA4; the interaction is required for a synergistic activation of GATA4 target genes transcription.

It localises to the nucleus. Its subcellular location is the chromosome. Cytokine-like nuclear factor with chromatin gene reader activity involved in chromatin modification and regulation of gene expression. Acts as a nucleosome-destabilizing factor that is recruited to genes during transcriptional activation. Recognizes and binds histone H3 without a preference for specific epigenetic markers and also binds DNA. Interacts with KDM1B and promotes its histone demethylase activity by facilitating the capture of H3 tails, they form a multifunctional enzyme complex that modifies transcribed chromatin and facilitates Pol II transcription through nucleosomes. Stimulates the acetylation of 'Lys-56' of nucleosomal histone H3 (H3K56ac) by EP300. With GATA4, co-binds a defined set of heart development genes and coregulates their expression during cardiomyocyte differentiation. Regulates p38 MAP kinase activity by mediating stress activation of MAPK14/p38alpha and specifically regulating MAPK14 signaling. Indirectly promotes phosphorylation of MAPK14 and activation of ATF2. The phosphorylation of MAPK14 requires upstream activity of MAP2K4 and MAP2K6. The chain is Cytokine-like nuclear factor N-PAC from Mus musculus (Mouse).